Consider the following 213-residue polypeptide: Orotate phosphoribosyltransferase (213 aa).

Lysine 26 provides a ligand contact to 5-phospho-alpha-D-ribose 1-diphosphate. Position 34–35 (34–35 (FF)) interacts with orotate. 5-phospho-alpha-D-ribose 1-diphosphate contacts are provided by residues 72 to 73 (YK), arginine 99, lysine 100, lysine 103, histidine 105, and 124 to 132 (DDVITAGTA). Orotate-binding residues include threonine 128 and arginine 156.

The protein belongs to the purine/pyrimidine phosphoribosyltransferase family. PyrE subfamily. As to quaternary structure, homodimer. Requires Mg(2+) as cofactor.

It catalyses the reaction orotidine 5'-phosphate + diphosphate = orotate + 5-phospho-alpha-D-ribose 1-diphosphate. It participates in pyrimidine metabolism; UMP biosynthesis via de novo pathway; UMP from orotate: step 1/2. In terms of biological role, catalyzes the transfer of a ribosyl phosphate group from 5-phosphoribose 1-diphosphate to orotate, leading to the formation of orotidine monophosphate (OMP). This Aliivibrio fischeri (strain MJ11) (Vibrio fischeri) protein is Orotate phosphoribosyltransferase.